Reading from the N-terminus, the 457-residue chain is Adenylosuccinate synthetase isozyme 2 B (457 aa).

GTP-binding positions include 40-46 and 68-70; these read GDEGKGK and GHT. Residue aspartate 41 is the Proton acceptor of the active site. Residues aspartate 41 and glycine 68 each coordinate Mg(2+). Position 41 (aspartate 41) interacts with substrate. IMP-binding positions include 41–44, 66–69, threonine 163, arginine 177, asparagine 256, threonine 271, and arginine 335; these read DEGK and NAGH. Histidine 69 functions as the Proton donor in the catalytic mechanism. A substrate-binding site is contributed by 331–337; that stretch reads VTTGRKR. Residues arginine 337, 363–365, and 445–448 contribute to the GTP site; these read KLD and GVGK.

The protein belongs to the adenylosuccinate synthetase family. As to quaternary structure, homodimer. Mg(2+) is required as a cofactor.

The protein resides in the cytoplasm. It localises to the mitochondrion. It catalyses the reaction IMP + L-aspartate + GTP = N(6)-(1,2-dicarboxyethyl)-AMP + GDP + phosphate + 2 H(+). It participates in purine metabolism; AMP biosynthesis via de novo pathway; AMP from IMP: step 1/2. Its activity is regulated as follows. Inhibited competitively by AMP and IMP and non-competitively by fructose 1,6-bisphosphate. Functionally, plays an important role in the de novo pathway and in the salvage pathway of purine nucleotide biosynthesis. Catalyzes the first committed step in the biosynthesis of AMP from IMP. The sequence is that of Adenylosuccinate synthetase isozyme 2 B (adss2-b) from Xenopus tropicalis (Western clawed frog).